Here is a 396-residue protein sequence, read N- to C-terminus: Activity-regulated cytoskeleton-associated protein (396 aa).

A coiled-coil region spans residues 54-78; that stretch reads SKQVERELKGLHRSVGKLESNLDGY. The interaction with SH3GL1 or SH3GL3 stretch occupies residues 89-100; that stretch reads KSIKACLCRCQE. An interaction with DNM2 region spans residues 195–214; it reads QPWVPGEDGQPSPGVDTQIF. Ser260 is subject to Phosphoserine. Glycyl lysine isopeptide (Lys-Gly) (interchain with G-Cter in ubiquitin) cross-links involve residues Lys268 and Lys269. A Phosphothreonine modification is found at Thr278. The tract at residues 356–396 is disordered; sequence QDDLEQAAEPAGPHLPVEDEAETLTPAPNSESVASDRTQPE. Residues 381 to 396 show a composition bias toward polar residues; that stretch reads PAPNSESVASDRTQPE.

Belongs to the ARC/ARG3.1 family. In terms of assembly, homooligomer; homooligomerizes into virion-like capsids. Interacts with SH3GL1/endophilin-2, SH3GL3/endophilin-3 and DNM2/DYN2. Interacts with CAMK2B (in the kinase inactive state); leading to target ARC to inactive synapses. Interacts with PSEN1. In terms of processing, palmitoylation anchors the protein into the membrane by allowing direct insertion into the hydrophobic core of the lipid bilayer. Ubiquitinated by UBE3A, leading to its degradation by the proteasome, thereby promoting AMPA receptors (AMPARs) expression at synapses. Ubiquitinated by RNF216 at Lys-268 and Lys-269 limiting ARC protein levels induced by synaptic activity and thus regulating ARC-dependent forms of synaptic plasticity. Post-translationally, phosphorylation at Ser-260 by CaMK2 prevents homooligomerization into virion-like capsids by disrupting an interaction surface essential for high-order oligomerization. Phosphorylation by CaMK2 inhibits synaptic activity.

It localises to the extracellular vesicle membrane. Its subcellular location is the postsynaptic cell membrane. The protein resides in the synapse. The protein localises to the postsynaptic density. It is found in the early endosome membrane. It localises to the cell projection. Its subcellular location is the dendrite. The protein resides in the cytoplasm. The protein localises to the cytoskeleton. It is found in the cell cortex. It localises to the dendritic spine. Its subcellular location is the cytoplasmic vesicle. The protein resides in the secretory vesicle. The protein localises to the acrosome. It is found in the clathrin-coated vesicle membrane. Its function is as follows. Master regulator of synaptic plasticity that self-assembles into virion-like capsids that encapsulate RNAs and mediate intercellular RNA transfer in the nervous system. ARC protein is released from neurons in extracellular vesicles that mediate the transfer of ARC mRNA into new target cells, where ARC mRNA can undergo activity-dependent translation. ARC capsids are endocytosed and are able to transfer ARC mRNA into the cytoplasm of neurons. Acts as a key regulator of synaptic plasticity: required for protein synthesis-dependent forms of long-term potentiation (LTP) and depression (LTD) and for the formation of long-term memory. Regulates synaptic plasticity by promoting endocytosis of AMPA receptors (AMPARs) in response to synaptic activity: this endocytic pathway maintains levels of surface AMPARs in response to chronic changes in neuronal activity through synaptic scaling, thereby contributing to neuronal homeostasis. Acts as a postsynaptic mediator of activity-dependent synapse elimination in the developing cerebellum by mediating elimination of surplus climbing fiber synapses. Accumulates at weaker synapses, probably to prevent their undesired enhancement. This suggests that ARC-containing virion-like capsids may be required to eliminate synaptic material. Required to transduce experience into long-lasting changes in visual cortex plasticity and for long-term memory. Involved in postsynaptic trafficking and processing of amyloid-beta A4 (APP) via interaction with PSEN1. In addition to its role in synapses, also involved in the regulation of the immune system: specifically expressed in skin-migratory dendritic cells and regulates fast dendritic cell migration, thereby regulating T-cell activation. In Homo sapiens (Human), this protein is Activity-regulated cytoskeleton-associated protein.